The chain runs to 130 residues: Small ribosomal subunit protein uS9 (130 aa).

The protein belongs to the universal ribosomal protein uS9 family.

This chain is Small ribosomal subunit protein uS9, found in Bacillus anthracis (strain A0248).